A 262-amino-acid chain; its full sequence is uncharacterized protein (262 aa).

This is an uncharacterized protein from Mycobacterium tuberculosis (strain CDC 1551 / Oshkosh).